Reading from the N-terminus, the 430-residue chain is Purine nucleoside phosphorylase LACC1 (430 aa).

Lys-247 carries the N6-acetyllysine modification. His-250, Cys-284, and His-301 together coordinate Zn(2+).

The protein belongs to the purine nucleoside phosphorylase YfiH/LACC1 family. In terms of assembly, interacts with FASN. Interacts with SDHA. Interacts with ATF6, EIF2AK3 and ERN1. In terms of processing, phosphorylated on tyrosine residues. As to expression, ubiquitously expressed, with higher expression levels in immune-related tissues such as lymph nodes and spleen. Expressed in both intestinal and peripheral myeloid-derived cells.

The protein resides in the cytoplasm. It is found in the nucleus. Its subcellular location is the endoplasmic reticulum. The protein localises to the peroxisome. It catalyses the reaction adenosine + phosphate = alpha-D-ribose 1-phosphate + adenine. The catalysed reaction is inosine + phosphate = alpha-D-ribose 1-phosphate + hypoxanthine. It carries out the reaction guanosine + phosphate = alpha-D-ribose 1-phosphate + guanine. The enzyme catalyses S-methyl-5'-thioadenosine + phosphate = 5-(methylsulfanyl)-alpha-D-ribose 1-phosphate + adenine. It catalyses the reaction adenosine + H2O + H(+) = inosine + NH4(+). In terms of biological role, purine nucleoside enzyme that catalyzes the phosphorolysis of adenosine, guanosine and inosine nucleosides, yielding D-ribose 1-phosphate and the respective free bases, adenine, guanine and hypoxanthine. Also catalyzes the phosphorolysis of S-methyl-5'-thioadenosine into adenine and S-methyl-5-thio-alpha-D-ribose 1-phosphate. Also has adenosine deaminase activity. Acts as a regulator of innate immunity in macrophages by modulating the purine nucleotide metabolism, thereby regulating the metabolic function and bioenergetic state of macrophages. Enables a purine nucleotide cycle between adenosine and inosine monophosphate and adenylosuccinate that prevents cytoplasmic acidification and balances the cytoplasmic-mitochondrial redox interface. The purine nucleotide cycle consumes aspartate and releases fumarate in a manner involving fatty acid oxidation and ATP-citrate lyase activity. Participates in pattern recognition receptor (PRR)-induced cytokines in macrophages: associates with the NOD2-signaling complex and promotes optimal NOD2-induced signaling, cytokine secretion and bacterial clearance. Localizes to the endoplasmic reticulum upon PRR stimulation of macrophages and associates with endoplasmic reticulum-stress sensors, promoting the endoplasmic reticulum unfolded protein response (UPR). Does not show laccase activity. In Homo sapiens (Human), this protein is Purine nucleoside phosphorylase LACC1.